The sequence spans 366 residues: tRNA/tmRNA (uracil-C(5))-methyltransferase (366 aa).

S-adenosyl-L-methionine-binding residues include Gln-189, Tyr-217, Asn-222, Glu-238, and Asp-298. Cys-323 (nucleophile) is an active-site residue. The active-site Proton acceptor is the Glu-357.

The protein belongs to the class I-like SAM-binding methyltransferase superfamily. RNA M5U methyltransferase family. TrmA subfamily.

It carries out the reaction uridine(54) in tRNA + S-adenosyl-L-methionine = 5-methyluridine(54) in tRNA + S-adenosyl-L-homocysteine + H(+). The enzyme catalyses uridine(341) in tmRNA + S-adenosyl-L-methionine = 5-methyluridine(341) in tmRNA + S-adenosyl-L-homocysteine + H(+). In terms of biological role, dual-specificity methyltransferase that catalyzes the formation of 5-methyluridine at position 54 (m5U54) in all tRNAs, and that of position 341 (m5U341) in tmRNA (transfer-mRNA). In Idiomarina loihiensis (strain ATCC BAA-735 / DSM 15497 / L2-TR), this protein is tRNA/tmRNA (uracil-C(5))-methyltransferase.